We begin with the raw amino-acid sequence, 560 residues long: Beta-hexosaminidase subunit B1 (560 aa).

The first 25 residues, 1–25 (MIILKRNIVFLLIIIIVLGIFIATS), serve as a signal peptide directing secretion. N-linked (GlcNAc...) asparagine glycans are attached at residues N59, N69, N81, N99, N161, N293, and N346. The Proton donor role is filled by E359. N-linked (GlcNAc...) asparagine glycans are attached at residues N366, N436, N472, and N547.

The protein belongs to the glycosyl hydrolase 20 family.

The protein localises to the lysosome. The catalysed reaction is Hydrolysis of terminal non-reducing N-acetyl-D-hexosamine residues in N-acetyl-beta-D-hexosaminides.. Its function is as follows. Responsible for the degradation of GM2 gangliosides, and a variety of other molecules containing terminal N-acetyl hexosamines. The chain is Beta-hexosaminidase subunit B1 (hexb1) from Dictyostelium discoideum (Social amoeba).